Here is a 271-residue protein sequence, read N- to C-terminus: Formamidopyrimidine-DNA glycosylase (271 aa).

Residue proline 2 is the Schiff-base intermediate with DNA of the active site. Catalysis depends on glutamate 3, which acts as the Proton donor. Lysine 58 functions as the Proton donor; for beta-elimination activity in the catalytic mechanism. DNA-binding residues include histidine 92, arginine 111, and lysine 152. The segment at tyrosine 237–asparagine 271 adopts an FPG-type zinc-finger fold. Arginine 261 acts as the Proton donor; for delta-elimination activity in catalysis.

The protein belongs to the FPG family. Monomer. Zn(2+) serves as cofactor.

The enzyme catalyses Hydrolysis of DNA containing ring-opened 7-methylguanine residues, releasing 2,6-diamino-4-hydroxy-5-(N-methyl)formamidopyrimidine.. It catalyses the reaction 2'-deoxyribonucleotide-(2'-deoxyribose 5'-phosphate)-2'-deoxyribonucleotide-DNA = a 3'-end 2'-deoxyribonucleotide-(2,3-dehydro-2,3-deoxyribose 5'-phosphate)-DNA + a 5'-end 5'-phospho-2'-deoxyribonucleoside-DNA + H(+). Functionally, involved in base excision repair of DNA damaged by oxidation or by mutagenic agents. Acts as a DNA glycosylase that recognizes and removes damaged bases. Has a preference for oxidized purines, such as 7,8-dihydro-8-oxoguanine (8-oxoG). Has AP (apurinic/apyrimidinic) lyase activity and introduces nicks in the DNA strand. Cleaves the DNA backbone by beta-delta elimination to generate a single-strand break at the site of the removed base with both 3'- and 5'-phosphates. The polypeptide is Formamidopyrimidine-DNA glycosylase (Wolbachia pipientis wMel).